The chain runs to 89 residues: MAQKKAGGSSRNGRDSAGRRLGVKKFGGETVVAGNIIIRQRGTKMKPGSNVGLGRDHTIFALVDGHVKFERRAEGRVHVSVEALPVAAE.

The interval 1–22 is disordered; the sequence is MAQKKAGGSSRNGRDSAGRRLG.

The protein belongs to the bacterial ribosomal protein bL27 family.

The chain is Large ribosomal subunit protein bL27 from Gluconacetobacter diazotrophicus (strain ATCC 49037 / DSM 5601 / CCUG 37298 / CIP 103539 / LMG 7603 / PAl5).